Consider the following 28-residue polypeptide: U-actitoxin-Ate1 (28 aa).

The first 15 residues, 1–15 (MSLILIFFAFTVLKS), serve as a signal peptide directing secretion. Cys-20 and Cys-26 are oxidised to a cystine.

Monomer in solution. Post-translationally, may be N-glycosylated at Asn-22. Activity with this modification has not be tested. As to expression, highly expressed in the tentacles. Weakly expressed in acrorhagi and mesenteric filaments.

The protein resides in the secreted. Its subcellular location is the nematocyst. Functionally, probable toxin expected to be employed in prey capture and/or defense against predators (based on its abundance in tentacles). Has only a weak affinity for lipid membranes. Shows moderate cytotoxic activity against breast cancer cell lines (MCF-7 and MDA-MB-231). This chain is U-actitoxin-Ate1, found in Actinia tenebrosa (Australian red waratah sea anemone).